Consider the following 274-residue polypeptide: Regulator of G-protein signaling rgs-11 (274 aa).

Residues serine 137–leucine 256 form the RGS domain.

The sequence is that of Regulator of G-protein signaling rgs-11 (rgs-11) from Caenorhabditis elegans.